Here is a 104-residue protein sequence, read N- to C-terminus: uncharacterized protein (104 aa).

A disordered region spans residues 55–104 (RPFSSDRINRPFSPDKKGEPIFPDKRDRPFSPDRINRPFSPDKKGEPIFP).

Its subcellular location is the plastid. This is an uncharacterized protein from Euglena longa (Euglenophycean alga).